We begin with the raw amino-acid sequence, 632 residues long: DNA polymerase eta (632 aa).

A UmuC domain is found at 26–309 (IAHIDMNAFF…FEITSFWTLG (284 aa)). Mg(2+) contacts are provided by aspartate 30 and aspartate 155. Residues 545–580 (EKTPKLECCKYQVTFTDQKALQEHADYHLALKLSEG) form a UBZ3-type zinc finger. 4 residues coordinate Zn(2+): cysteine 552, cysteine 553, histidine 568, and histidine 572. Residues 598-632 (LLFSRKRPNSQHTATPQKKQVTSSKNILSFFTRKK) are disordered. Residues 607 to 626 (SQHTATPQKKQVTSSKNILS) are compositionally biased toward polar residues. Residues 625 to 632 (LSFFTRKK) are POL30-binding.

It belongs to the DNA polymerase type-Y family. In terms of assembly, interacts with POL30. This interaction is essential for the polymerase eta function.

It is found in the nucleus. The enzyme catalyses DNA(n) + a 2'-deoxyribonucleoside 5'-triphosphate = DNA(n+1) + diphosphate. Functionally, DNA polymerase specifically involved in DNA repair. Plays an important role in translesion synthesis, where the normal high fidelity DNA polymerases cannot proceed and DNA synthesis stalls. Plays an important role in the repair of UV-induced pyrimidine dimers. Depending on the context, it inserts the correct base, but causes frequent base transitions and transversions. Efficiently incorporates nucleotides opposite to other UV or oxidative DNA damages like O(6)-methylguanine, 7,8-dihydro-8-oxoguanine, 2,6-diamino-4-hydroxy-5-formamidopyrimidine of 2'-deoxyguanosine (FaPydG), or p-benzoquinone DNA adducts. The polypeptide is DNA polymerase eta (RAD30) (Saccharomyces cerevisiae (strain ATCC 204508 / S288c) (Baker's yeast)).